A 396-amino-acid polypeptide reads, in one-letter code: Elongation factor Tu (396 aa).

Positions 10–206 constitute a tr-type G domain; that stretch reads KPHVNVGTIG…ALDTYIPEPE (197 aa). The tract at residues 19-26 is G1; sequence GHVDHGKT. 19 to 26 lines the GTP pocket; it reads GHVDHGKT. Mg(2+) is bound at residue Thr26. A G2 region spans residues 60 to 64; it reads GITIN. Residues 81-84 form a G3 region; sequence DCPG. GTP is bound by residues 81-85 and 136-139; these read DCPGH and NKCD. The tract at residues 136–139 is G4; it reads NKCD. The G5 stretch occupies residues 174–176; the sequence is SAL.

This sequence belongs to the TRAFAC class translation factor GTPase superfamily. Classic translation factor GTPase family. EF-Tu/EF-1A subfamily. As to quaternary structure, monomer.

The protein resides in the cytoplasm. The enzyme catalyses GTP + H2O = GDP + phosphate + H(+). GTP hydrolase that promotes the GTP-dependent binding of aminoacyl-tRNA to the A-site of ribosomes during protein biosynthesis. This Acinetobacter baylyi (strain ATCC 33305 / BD413 / ADP1) protein is Elongation factor Tu.